Here is a 961-residue protein sequence, read N- to C-terminus: MDLNVKQSGIHSVALHTTYFQNRSGKVYKRAEERYLRNDLSCGLAQCGTCKDFGTNPLLKIENPVRNAKVGRHALIVDSTSLIRFYDLFDSSLLRDLIVTQTVWEGVKAKAVPAYKKMNSLCYEDAKDRFHVFMNEFHCETFSESSKFEDLSRGEELLLSTALYLKTHWQKHNVAPVVLVFDEDSKKRMENHYQHVMYLKEYIQNLEDPGKQALLDQMAAYESSGNGNEKQIFDEYLSHDRIMEGIASGTIKRGNFSVSRENYREATVIIDDQLTSWFITGNNCNRAVNGDTVAVQLLPEDQWTAPEKKIRLRDVEEYVKTADDMGNEDEENDDENDEPKAKKSKKMTVSTAKVVGIIKRNWREYCGMLLPSTVKGARRHLFCPAERLIPRIRIETEQAETLSQQRIVVAIDHWPRDSKYPLGHYVRSIGEMGSRETENEVLLLEHDIPHAPFSESVLDCLPREEWEPDLTENRGPLPRVDLRDLTICSVDPLGCTDIDDALHCKQIGEDLFEVGVHIADVTHFVRPGTAIDDEAALRGTTVYLCDRRIDMLPCLLSSNLCSLRGEEERYAFSCIWTMTSSADIQSVKYHKSLIKSKAALTYEKAQEIIDDPKEQNDVALGLRGLMKLSKVLNARRTGNGALTLASSEVRFDMDWESRTPKKVMEKQHLDTHSMVEEFMLLANISVAEKILEEYPDCALLRRHPVPLKESYKPLVEAARHRGFEIIVESGKGLADSLNRCVDKKNPMLNRLLRMLTTRCMTQAVYFSAGTVPVPQYQHFGLACAIYTHFTSPIRRYADVIVHRLLAAAIGADDIQSGLLNQARCTKICTNINYRHKQAQYAGRASVQLNVVRYFKGKVETCEGFVMGVRNNGIQVFVPKYGLESIIVLQTSAASGTTIDVEEMSVKVNGDVVIKELEPVTVRISVNEKNQQRPRVELQLIKPAIPGLSVDFDLSSSEGLGL.

A PINc domain is found at 73 to 188 (HALIVDSTSL…LVFDEDSKKR (116 aa)). Residues 232-338 (IFDEYLSHDR…DEENDDENDE (107 aa)) form the CSD1 domain. Residues 322–346 (ADDMGNEDEENDDENDEPKAKKSKK) form a disordered region. Residues 325 to 337 (MGNEDEENDDEND) show a composition bias toward acidic residues. Residues 381-447 (LFCPAERLIP…ENEVLLLEHD (67 aa)) enclose the CSD2 domain. Residues 479–809 (RVDLRDLTIC…IVHRLLAAAI (331 aa)) form the RNB domain.

The protein belongs to the RNR ribonuclease family. As to quaternary structure, component of the RNA exosome complex. Ubiquitously expressed.

The protein localises to the nucleus. It is found in the nucleoplasm. Putative catalytic component of the RNA exosome complex which has 3'-&gt;5' exoribonuclease activity and participates in a multitude of cellular RNA processing and degradation events. Has both 3'-5' exonuclease and endonuclease activities. Involved in regulation of antisense ribosomal siRNA production. The polypeptide is Probable exosome complex exonuclease RRP44 (dis-3) (Caenorhabditis elegans).